Here is a 636-residue protein sequence, read N- to C-terminus: Chaperone protein DnaK (636 aa).

Position 198 is a phosphothreonine; by autocatalysis (T198). A compositionally biased stretch (low complexity) spans 602–613 (QPAGEEQAGAAA). The tract at residues 602–636 (QPAGEEQAGAAAHEGEAKGEKVVDADFEEVKEDKK) is disordered. Basic and acidic residues predominate over residues 614-625 (HEGEAKGEKVVD). Residues 626–636 (ADFEEVKEDKK) show a composition bias toward acidic residues.

The protein belongs to the heat shock protein 70 family.

In terms of biological role, acts as a chaperone. The polypeptide is Chaperone protein DnaK (Geotalea daltonii (strain DSM 22248 / JCM 15807 / FRC-32) (Geobacter daltonii)).